Here is a 487-residue protein sequence, read N- to C-terminus: UDP-glycosyltransferase 85A7 (487 aa).

UDP-alpha-D-glucose contacts are provided by residues 364–366 (CPQ), 381–389 (HCGWNSTLE), and 403–406 (FSEQ).

It belongs to the UDP-glycosyltransferase family. In terms of tissue distribution, expressed in roots, shoots, leaves and flowers.

This Arabidopsis thaliana (Mouse-ear cress) protein is UDP-glycosyltransferase 85A7 (UGT85A7).